A 327-amino-acid polypeptide reads, in one-letter code: Phenylalanine--tRNA ligase alpha subunit (327 aa).

Mg(2+) is bound at residue Glu252.

Belongs to the class-II aminoacyl-tRNA synthetase family. Phe-tRNA synthetase alpha subunit type 1 subfamily. Tetramer of two alpha and two beta subunits. Requires Mg(2+) as cofactor.

Its subcellular location is the cytoplasm. The catalysed reaction is tRNA(Phe) + L-phenylalanine + ATP = L-phenylalanyl-tRNA(Phe) + AMP + diphosphate + H(+). The chain is Phenylalanine--tRNA ligase alpha subunit from Klebsiella pneumoniae subsp. pneumoniae (strain ATCC 700721 / MGH 78578).